Consider the following 463-residue polypeptide: Alpha-L-arabinofuranosidase B (463 aa).

The signal sequence occupies residues 1-26 (MIPQLNRNYAWAIALGLVARSSLVSA). A catalytic region spans residues 27–308 (GPCDIYASGG…ILGIGGHNSK (282 aa)). An intrachain disulfide couples Cys-29 to Cys-39. Asn-81 carries an N-linked (GlcNAc...) asparagine glycan. 2 cysteine pairs are disulfide-bonded: Cys-89–Cys-94 and Cys-184–Cys-185. Asp-227 contributes to the substrate binding site. Glu-229 acts as the Nucleophile in catalysis. Asn-230 serves as a coordination point for substrate. Asn-280 is a glycosylation site (N-linked (GlcNAc...) asparagine). A substrate-binding site is contributed by Gly-304. Positions 309 to 463 (LTVGSSISLR…VSWVVSASFA (155 aa)) are ABD. An N-linked (GlcNAc...) asparagine glycan is attached at Asn-332. Cys-366 and Cys-404 are joined by a disulfide. Substrate-binding residues include His-381, Asn-383, Phe-384, His-428, Asp-430, Leu-433, and Asp-453.

It belongs to the glycosyl hydrolase 54 family. In terms of processing, residue Asn-280 is mannosylated with up to 7 mannose residues.

Its subcellular location is the secreted. The catalysed reaction is Hydrolysis of terminal non-reducing alpha-L-arabinofuranoside residues in alpha-L-arabinosides.. Its pathway is glycan metabolism; L-arabinan degradation. In terms of biological role, secreted alpha-L-arabinofuranosidase that actively hydrolyzes p-NP-alpha-L-arabinofuranoside and is specific for furanose configuration of the carbohydrate ring. Also exhibits significant activity against polymeric arabinose-containing substrates such as arabinan and arabinoxylan, a major component of plant hemicellulose. This chain is Alpha-L-arabinofuranosidase B (abfB), found in Penicillium canescens.